A 194-amino-acid polypeptide reads, in one-letter code: ATP-dependent Clp protease proteolytic subunit (194 aa).

The active-site Nucleophile is the Ser-99. His-124 is an active-site residue.

Belongs to the peptidase S14 family. In terms of assembly, fourteen ClpP subunits assemble into 2 heptameric rings which stack back to back to give a disk-like structure with a central cavity, resembling the structure of eukaryotic proteasomes.

Its subcellular location is the cytoplasm. The catalysed reaction is Hydrolysis of proteins to small peptides in the presence of ATP and magnesium. alpha-casein is the usual test substrate. In the absence of ATP, only oligopeptides shorter than five residues are hydrolyzed (such as succinyl-Leu-Tyr-|-NHMec, and Leu-Tyr-Leu-|-Tyr-Trp, in which cleavage of the -Tyr-|-Leu- and -Tyr-|-Trp bonds also occurs).. Functionally, cleaves peptides in various proteins in a process that requires ATP hydrolysis. Has a chymotrypsin-like activity. Plays a major role in the degradation of misfolded proteins. This is ATP-dependent Clp protease proteolytic subunit from Clostridium perfringens (strain ATCC 13124 / DSM 756 / JCM 1290 / NCIMB 6125 / NCTC 8237 / Type A).